A 263-amino-acid chain; its full sequence is Indolethylamine N-methyltransferase (263 aa).

Lysine 13 carries the post-translational modification N6-succinyllysine. Residues tyrosine 20, tyrosine 25, 63–64 (GS), tyrosine 69, aspartate 85, and asparagine 90 contribute to the S-adenosyl-L-methionine site. The residue at position 96 (lysine 96) is an N6-succinyllysine. Residues 142 to 143 (DV) and leucine 163 contribute to the S-adenosyl-L-methionine site.

The protein belongs to the class I-like SAM-binding methyltransferase superfamily. NNMT/PNMT/TEMT family. Monomer.

The protein resides in the cytoplasm. It catalyses the reaction a tertiary amine + S-adenosyl-L-methionine = a methylated tertiary amine + S-adenosyl-L-homocysteine + H(+). The catalysed reaction is a secondary amine + S-adenosyl-L-methionine = a methylated secondary amine + S-adenosyl-L-homocysteine + H(+). It carries out the reaction a primary amine + S-adenosyl-L-methionine = a methylated primary amine + S-adenosyl-L-homocysteine + H(+). The enzyme catalyses dimethyl sulfide + S-adenosyl-L-methionine = trimethylsulfonium + S-adenosyl-L-homocysteine. In terms of biological role, catalyzes the N-methylation of tryptamine and structurally related compounds. Functions as a thioether S-methyltransferase and is active with a variety of thioethers and the corresponding selenium and tellurium compounds, including 3-methylthiopropionaldehyde, dimethyl selenide, dimethyl telluride, 2-methylthioethylamine, 2-methylthioethanol, methyl-n-propyl sulfide and diethyl sulfide. Plays an important role in the detoxification of selenium compounds. This chain is Indolethylamine N-methyltransferase (INMT), found in Pongo abelii (Sumatran orangutan).